A 549-amino-acid polypeptide reads, in one-letter code: MNTFPLFFKLEDRKVLIVGGGDVALRKADLLSRAGACITVLAPSINHEIQALLSSSKHELIYEHYNKTYMTNSRVIIAATDDERLNHQIHADATALNIPVNVVDTPHLCDFIFPAIVDRNPIVIGISSNGKAPVLARLLRARLETLIPQGYGKLAKLAGEFRGDVKAKIPTLTGRRQFWERAFEGKVSQLMFAGNENEALAQLQADLDNTAASITAKDATDDNGLSTASTSAPAIANEFTAARNTMGEVYIVGAGPGDPELLTFKALRLMQQADIVYYDALVSPQVLDLCRRDADKVFVGKKRRNHAVAQLGINELLVNSAKEGRRVVRLKGGDPFIFGRGGEEIESLRAHNIPYQVVPGITAANAAASYAGIPLTHRDHSQSVRFVTGFLKAGAPNNNFKNFLDTDETVVFYMGLHSLPRLTEGLIDAGRSAETPIAIVSNASMPNQQVLTGTLASIVELQEKNQLPTPALLIMGDVVSLHHDLAWYNLHNQQHNQNTSETDNNWLRGGTATTPKSNAQFNAHQQAHALSMITNLATEDGDLEQLIIG.

Residues 1 to 203 (MNTFPLFFKL…GNENEALAQL (203 aa)) are precorrin-2 dehydrogenase /sirohydrochlorin ferrochelatase. NAD(+)-binding positions include 22–23 (DV) and 43–44 (PS). Serine 128 is modified (phosphoserine). The uroporphyrinogen-III C-methyltransferase stretch occupies residues 247-549 (GEVYIVGAGP…DGDLEQLIIG (303 aa)). Proline 256 contacts S-adenosyl-L-methionine. Catalysis depends on aspartate 279, which acts as the Proton acceptor. Lysine 301 (proton donor) is an active-site residue. Residues 332 to 334 (GGD), isoleucine 337, 362 to 363 (TA), methionine 414, and alanine 443 each bind S-adenosyl-L-methionine.

In the N-terminal section; belongs to the precorrin-2 dehydrogenase / sirohydrochlorin ferrochelatase family. It in the C-terminal section; belongs to the precorrin methyltransferase family.

It carries out the reaction uroporphyrinogen III + 2 S-adenosyl-L-methionine = precorrin-2 + 2 S-adenosyl-L-homocysteine + H(+). The enzyme catalyses precorrin-2 + NAD(+) = sirohydrochlorin + NADH + 2 H(+). The catalysed reaction is siroheme + 2 H(+) = sirohydrochlorin + Fe(2+). The protein operates within cofactor biosynthesis; adenosylcobalamin biosynthesis; precorrin-2 from uroporphyrinogen III: step 1/1. It participates in cofactor biosynthesis; adenosylcobalamin biosynthesis; sirohydrochlorin from precorrin-2: step 1/1. Its pathway is porphyrin-containing compound metabolism; siroheme biosynthesis; precorrin-2 from uroporphyrinogen III: step 1/1. It functions in the pathway porphyrin-containing compound metabolism; siroheme biosynthesis; siroheme from sirohydrochlorin: step 1/1. The protein operates within porphyrin-containing compound metabolism; siroheme biosynthesis; sirohydrochlorin from precorrin-2: step 1/1. Multifunctional enzyme that catalyzes the SAM-dependent methylations of uroporphyrinogen III at position C-2 and C-7 to form precorrin-2 via precorrin-1. Then it catalyzes the NAD-dependent ring dehydrogenation of precorrin-2 to yield sirohydrochlorin. Finally, it catalyzes the ferrochelation of sirohydrochlorin to yield siroheme. This chain is Siroheme synthase, found in Psychrobacter arcticus (strain DSM 17307 / VKM B-2377 / 273-4).